Consider the following 445-residue polypeptide: Disintegrin and metalloproteinase domain-containing protein 18 (445 aa).

The Peptidase M12B domain occupies 1 to 106 (IYRKHLKYIG…LDMQCLGDLS (106 aa)). Residues 1–409 (IYRKHLKYIG…TKRLSQHADS (409 aa)) are Extracellular-facing. 3 cysteine pairs are disulfide-bonded: Cys18–Cys101, Cys60–Cys85, and Cys62–Cys67. Residues Asn19 and Asn59 are each glycosylated (N-linked (GlcNAc...) asparagine). Residues Asn84 and Asn131 are each glycosylated (N-linked (GlcNAc...) asparagine). The Disintegrin domain occupies 113-202 (QSVCGNGIVE…HCVPDTFALD (90 aa)). A disulfide bridge connects residues Cys173 and Cys194. N-linked (GlcNAc...) asparagine glycans are attached at residues Asn333 and Asn340. The EGF-like domain occupies 342-376 (TGNDCNAAKKCKGNGICNNFGHCQCFPDYRPPDCN). 3 cysteine pairs are disulfide-bonded: Cys346-Cys358, Cys352-Cys364, and Cys366-Cys375. The chain crosses the membrane as a helical span at residues 410 to 430 (WVILGFFIFLPFIMTLFLGII). Over 431–445 (KRNERKIVPQKEQER) the chain is Cytoplasmic.

Post-translationally, the prodomain and the metalloprotease-like domain are cleaved during the epididymal maturation of the spermatozoa. As to expression, expressed specifically in testis.

It localises to the membrane. In terms of biological role, sperm surface membrane protein that may be involved in spermatogenesis and fertilization. This is a non catalytic metalloprotease-like protein. This chain is Disintegrin and metalloproteinase domain-containing protein 18 (Adam18), found in Rattus norvegicus (Rat).